We begin with the raw amino-acid sequence, 530 residues long: MNNARPIRRALISVSDKTGIVEFAQALAERGVDILSTGGTARLLAEKGISVTEVSDYTGFPEMMDGRVKTLHPKVHGGVLGRRGQDDDIMEQHGINPIDMVVVNLYPFAETVAKEGCTLADAVENIDIGGPTMVRSAAKNHKDVTIVVNAHDYDRVIAEMDANEKSLTLETRFDLAIAAFEHTASYDGMIANYFGTMVPSYGENKEGDEESKFPRTFNQQFEKKQDMRYGENSHQAAAFYVEANPEEASVSTARQIQGKALSYNNIADTDAALECVKEFDEPACVIVKHANPCGVALGKDILEAYDRAFKTDPTSAFGGIIAFNRELDAATATAITERQFVEVIIAPSVSTEAVEIVAAKKNLRLLECGEWTTKTTGFDVKRVNGGLLVQDRDQGMVSEDDLQVVSKRQPTAEELKDALFCWKVAKYVKSNAIVYSKGDMTIGVGAGQMSRVYSAKIAGIKAADEGLQVEGCVMASDAFFPFRDGIDAAAEAGIKCVIQPGGSMRDNEVIEAADEHGMAMIFTGMRHFRH.

The region spanning Met-1 to Val-148 is the MGS-like domain.

It belongs to the PurH family.

It carries out the reaction (6R)-10-formyltetrahydrofolate + 5-amino-1-(5-phospho-beta-D-ribosyl)imidazole-4-carboxamide = 5-formamido-1-(5-phospho-D-ribosyl)imidazole-4-carboxamide + (6S)-5,6,7,8-tetrahydrofolate. The enzyme catalyses IMP + H2O = 5-formamido-1-(5-phospho-D-ribosyl)imidazole-4-carboxamide. Its pathway is purine metabolism; IMP biosynthesis via de novo pathway; 5-formamido-1-(5-phospho-D-ribosyl)imidazole-4-carboxamide from 5-amino-1-(5-phospho-D-ribosyl)imidazole-4-carboxamide (10-formyl THF route): step 1/1. It participates in purine metabolism; IMP biosynthesis via de novo pathway; IMP from 5-formamido-1-(5-phospho-D-ribosyl)imidazole-4-carboxamide: step 1/1. The sequence is that of Bifunctional purine biosynthesis protein PurH from Aliivibrio fischeri (strain ATCC 700601 / ES114) (Vibrio fischeri).